We begin with the raw amino-acid sequence, 124 residues long: Ribonuclease pancreatic (124 aa).

Residues 1–13 (KETAAEKFQRQHM) show a composition bias toward basic and acidic residues. Positions 1–21 (KETAAEKFQRQHMDTSSSLSN) are disordered. 2 residues coordinate substrate: Lys7 and Arg10. His12 (proton acceptor) is an active-site residue. Cystine bridges form between Cys26–Cys84, Cys40–Cys95, Cys58–Cys110, and Cys65–Cys72. Residue Asn34 is glycosylated (N-linked (GlcNAc...) asparagine). Residues 41–45 (KPVNT), Lys66, and Arg85 each bind substrate. Catalysis depends on His119, which acts as the Proton donor.

This sequence belongs to the pancreatic ribonuclease family. In terms of assembly, monomer. Interacts with and forms tight 1:1 complexes with RNH1. Dimerization of two such complexes may occur. Interaction with RNH1 inhibits this protein. As to expression, pancreas.

It localises to the secreted. The catalysed reaction is an [RNA] containing cytidine + H2O = an [RNA]-3'-cytidine-3'-phosphate + a 5'-hydroxy-ribonucleotide-3'-[RNA].. It carries out the reaction an [RNA] containing uridine + H2O = an [RNA]-3'-uridine-3'-phosphate + a 5'-hydroxy-ribonucleotide-3'-[RNA].. Functionally, endonuclease that catalyzes the cleavage of RNA on the 3' side of pyrimidine nucleotides. Acts on single-stranded and double-stranded RNA. The protein is Ribonuclease pancreatic (RNASE1) of Hippopotamus amphibius (Hippopotamus).